The sequence spans 530 residues: Chaperone Ric-8A (530 aa).

At S435 the chain carries Phosphoserine. Residues T440 and T442 each carry the phosphothreonine modification. S501, S522, S523, and S527 each carry phosphoserine.

The protein belongs to the synembryn family. Interacts with GDP-bound G alpha proteins GNAI1, GNAO1 and GNAQ, and with GNA13 with lower affinity. Does not interact with G-alpha proteins when they are in complex with subunits beta and gamma. Interacts (via C-terminus) with RGS14; the interaction stimulates the dissociation of the complex between RGS14 and the active GTP-bound form of GNAI1. Interacts with NCS1; interaction is favored in the absence of Ca(2+) and myristoylation of NCS1 is not required. In terms of processing, phosphorylated at Ser-435 and Thr-440 by CK2, stabilizing its interface with G alpha proteins.

It is found in the cytoplasm. Its subcellular location is the cell cortex. Its function is as follows. Chaperone that specifically binds and folds nascent G alpha proteins prior to G protein heterotrimer formation, promoting their stability and activity: folds GNAI1, GNAO1, GNA13 and GNAQ. Does not fold G(s) G-alpha proteins GNAS nor GNAL. Also acts as a guanine nucleotide exchange factor (GEF) for G alpha proteins by stimulating exchange of bound GDP for free GTP. Involved in regulation of microtubule pulling forces during mitotic movement of chromosomes by stimulating G(i)-alpha protein (GNAI1), possibly leading to release G(i)-alpha-GTP and NuMA proteins from the NuMA-GPSM2-G(i)-alpha-GDP complex. Also acts as an activator for G(q)-alpha (GNAQ) protein by enhancing the G(q)-coupled receptor-mediated ERK activation. In Bos taurus (Bovine), this protein is Chaperone Ric-8A (RIC8A).